Reading from the N-terminus, the 329-residue chain is MSIEVRNVSKRFNSFQALNAINLDINSGELVALLGPSGCGKTTLLRIIAGLETPDQGNIVFHGEDVSGHDVRDRNVGFVFQHYALFRHMSVFDNVAFGLRMKPKGERPSESKIAEKVHELLNMVQLDWLSDRYPEQLSGGQRQRIALARALAVEPKVLLLDEPFGALDAKVRKELRRWLARLHEDINLTSVFVTHDQEEAMEVADRIVVMNKGVIEQIGSPGEVYDQPANDFVYHFLGDSNRLALSEGHHVLFRPHEVSLSRHETEGHHAAEVRDIRPLGATTRVTLKVEGQSELIEAEVVKDHDSLTGLARGETLFFRPKVWQKVADI.

Residues 3-237 (IEVRNVSKRF…PANDFVYHFL (235 aa)) form the ABC transporter domain. ATP is bound at residue 35–42 (GPSGCGKT).

It belongs to the ABC transporter superfamily. Sulfate/tungstate importer (TC 3.A.1.6) family. In terms of assembly, the complex is composed of two ATP-binding proteins (CysA), two transmembrane proteins (CysT and CysW) and a solute-binding protein (CysP).

The protein resides in the cell inner membrane. The catalysed reaction is sulfate(out) + ATP + H2O = sulfate(in) + ADP + phosphate + H(+). The enzyme catalyses thiosulfate(out) + ATP + H2O = thiosulfate(in) + ADP + phosphate + H(+). Functionally, part of the ABC transporter complex CysAWTP involved in sulfate/thiosulfate import. Responsible for energy coupling to the transport system. The polypeptide is Sulfate/thiosulfate import ATP-binding protein CysA (Pseudomonas putida (strain ATCC 47054 / DSM 6125 / CFBP 8728 / NCIMB 11950 / KT2440)).